A 70-amino-acid chain; its full sequence is Cold shock-like protein CspG (70 aa).

A CSD domain is found at 7–67 (GLVKWFNADK…GQRGPAAANV (61 aa)).

The protein localises to the cytoplasm. The protein is Cold shock-like protein CspG (cspG) of Escherichia coli O157:H7.